Reading from the N-terminus, the 256-residue chain is UPF0246 protein Maqu_2499 (256 aa).

Belongs to the UPF0246 family.

In Marinobacter nauticus (strain ATCC 700491 / DSM 11845 / VT8) (Marinobacter aquaeolei), this protein is UPF0246 protein Maqu_2499.